The chain runs to 397 residues: Phosphoglycerate kinase (397 aa).

Substrate is bound by residues 21–23 (DFN), R37, 60–63 (HLGR), R119, and R152. ATP contacts are provided by residues K203, G294, E325, and 354-357 (GGDS).

This sequence belongs to the phosphoglycerate kinase family. Monomer.

It localises to the cytoplasm. It carries out the reaction (2R)-3-phosphoglycerate + ATP = (2R)-3-phospho-glyceroyl phosphate + ADP. Its pathway is carbohydrate degradation; glycolysis; pyruvate from D-glyceraldehyde 3-phosphate: step 2/5. This Chlorobium limicola (strain DSM 245 / NBRC 103803 / 6330) protein is Phosphoglycerate kinase.